The primary structure comprises 340 residues: Tetraacyldisaccharide 4'-kinase (340 aa).

47–54 provides a ligand contact to ATP; it reads SVGGTGKT.

This sequence belongs to the LpxK family.

It catalyses the reaction a lipid A disaccharide + ATP = a lipid IVA + ADP + H(+). The protein operates within glycolipid biosynthesis; lipid IV(A) biosynthesis; lipid IV(A) from (3R)-3-hydroxytetradecanoyl-[acyl-carrier-protein] and UDP-N-acetyl-alpha-D-glucosamine: step 6/6. Functionally, transfers the gamma-phosphate of ATP to the 4'-position of a tetraacyldisaccharide 1-phosphate intermediate (termed DS-1-P) to form tetraacyldisaccharide 1,4'-bis-phosphate (lipid IVA). The protein is Tetraacyldisaccharide 4'-kinase of Flavobacterium johnsoniae (strain ATCC 17061 / DSM 2064 / JCM 8514 / BCRC 14874 / CCUG 350202 / NBRC 14942 / NCIMB 11054 / UW101) (Cytophaga johnsonae).